The following is a 108-amino-acid chain: Large ribosomal subunit protein uL23 (108 aa).

Belongs to the universal ribosomal protein uL23 family. Part of the 50S ribosomal subunit. Contacts protein L29, and trigger factor when it is bound to the ribosome.

In terms of biological role, one of the early assembly proteins it binds 23S rRNA. One of the proteins that surrounds the polypeptide exit tunnel on the outside of the ribosome. Forms the main docking site for trigger factor binding to the ribosome. This is Large ribosomal subunit protein uL23 from Polaromonas sp. (strain JS666 / ATCC BAA-500).